We begin with the raw amino-acid sequence, 362 residues long: Phosphoglycolate phosphatase 1B, chloroplastic (362 aa).

The N-terminal 54 residues, 1-54, are a transit peptide targeting the chloroplast; the sequence is MLSRSVASAVTPVSSSSLLPNSKPIFCLKTLSGYRSSSFCGGCIRKINHKPLRM. Threonine 55 carries the post-translational modification N-acetylthreonine. The Nucleophile role is filled by glutamate 80. Position 356 is a phosphoserine (serine 356).

Belongs to the HAD-like hydrolase superfamily. CbbY/CbbZ/Gph/YieH family.

The protein resides in the plastid. It localises to the chloroplast. It carries out the reaction 2-phosphoglycolate + H2O = glycolate + phosphate. Photorespiratory enzyme that dephosphorylates the 2-phosphoglycolate produced by the RuBisCO oxygenation reaction. This chain is Phosphoglycolate phosphatase 1B, chloroplastic (PGLP1B), found in Arabidopsis thaliana (Mouse-ear cress).